The following is a 162-amino-acid chain: MSTNPKPQRKKPNVTPTVAHRTSSSRVAVRSLVEFTCCRAGALDWVCARRGRLPSGRNLEVDVSLSPRHVGPRAGPGLSPGTLGPSMAMRVAGGRDGSCLPVALGLAGAPQTPGVGRAIWVRSSIPLRAASPTSWGTYRSSAPLLEALPGPWRMASGFWKTA.

Residues Met-1–Ser-23 form a disordered region. Residues Val-14–Ser-23 are compositionally biased toward polar residues.

The protein localises to the host cytoplasm. Its subcellular location is the host perinuclear region. Contributes to the RIGI-mediated inhibition of type I interferon production. The polypeptide is F protein (Homo sapiens (Human)).